Consider the following 208-residue polypeptide: Large ribosomal subunit protein uL3 (208 aa).

The interval 116–148 is disordered; it reads GFQGVIKRHGQSRGPMAHGSRYHRRPGSMGPVA.

It belongs to the universal ribosomal protein uL3 family. Part of the 50S ribosomal subunit. Forms a cluster with proteins L14 and L19.

One of the primary rRNA binding proteins, it binds directly near the 3'-end of the 23S rRNA, where it nucleates assembly of the 50S subunit. The protein is Large ribosomal subunit protein uL3 of Streptococcus agalactiae serotype Ia (strain ATCC 27591 / A909 / CDC SS700).